A 460-amino-acid polypeptide reads, in one-letter code: Cysteine--tRNA ligase (460 aa).

Zn(2+) is bound at residue cysteine 28. Residues 30–40 carry the 'HIGH' region motif; the sequence is MTVYDYCHLGH. Residues cysteine 209, histidine 234, and glutamate 238 each coordinate Zn(2+). Positions 266-270 match the 'KMSKS' region motif; the sequence is KMSKS. ATP is bound at residue lysine 269.

It belongs to the class-I aminoacyl-tRNA synthetase family. In terms of assembly, monomer. Zn(2+) is required as a cofactor.

The protein localises to the cytoplasm. It catalyses the reaction tRNA(Cys) + L-cysteine + ATP = L-cysteinyl-tRNA(Cys) + AMP + diphosphate. The protein is Cysteine--tRNA ligase of Pseudomonas fluorescens (strain Pf0-1).